The primary structure comprises 98 residues: NADH-ubiquinone oxidoreductase chain 4L (98 aa).

Helical transmembrane passes span 1-21, 29-49, and 61-81; these read MSMV…GLLM, SLLC…MTIL, and IILL…LVMV.

The protein belongs to the complex I subunit 4L family. In terms of assembly, core subunit of respiratory chain NADH dehydrogenase (Complex I) which is composed of 45 different subunits.

The protein resides in the mitochondrion inner membrane. It carries out the reaction a ubiquinone + NADH + 5 H(+)(in) = a ubiquinol + NAD(+) + 4 H(+)(out). In terms of biological role, core subunit of the mitochondrial membrane respiratory chain NADH dehydrogenase (Complex I) which catalyzes electron transfer from NADH through the respiratory chain, using ubiquinone as an electron acceptor. Part of the enzyme membrane arm which is embedded in the lipid bilayer and involved in proton translocation. In Arctocephalus australis (South American fur seal), this protein is NADH-ubiquinone oxidoreductase chain 4L (MT-ND4L).